A 79-amino-acid chain; its full sequence is Putative defensin-like protein 146 (79 aa).

Residues 1–25 form the signal peptide; that stretch reads MMKNQFQLSLIILTFFILLELGVMG. 4 disulfide bridges follow: Cys35/Cys78, Cys46/Cys66, Cys51/Cys72, and Cys55/Cys74.

It belongs to the DEFL family.

The protein resides in the secreted. The chain is Putative defensin-like protein 146 (LCR9) from Arabidopsis thaliana (Mouse-ear cress).